We begin with the raw amino-acid sequence, 300 residues long: UDP-3-O-acyl-N-acetylglucosamine deacetylase (300 aa).

Residues His-78, His-237, and Asp-241 each coordinate Zn(2+). His-264 serves as the catalytic Proton donor.

This sequence belongs to the LpxC family. Zn(2+) serves as cofactor.

It carries out the reaction a UDP-3-O-[(3R)-3-hydroxyacyl]-N-acetyl-alpha-D-glucosamine + H2O = a UDP-3-O-[(3R)-3-hydroxyacyl]-alpha-D-glucosamine + acetate. Its pathway is glycolipid biosynthesis; lipid IV(A) biosynthesis; lipid IV(A) from (3R)-3-hydroxytetradecanoyl-[acyl-carrier-protein] and UDP-N-acetyl-alpha-D-glucosamine: step 2/6. Functionally, catalyzes the hydrolysis of UDP-3-O-myristoyl-N-acetylglucosamine to form UDP-3-O-myristoylglucosamine and acetate, the committed step in lipid A biosynthesis. The sequence is that of UDP-3-O-acyl-N-acetylglucosamine deacetylase from Acinetobacter baumannii (strain ATCC 17978 / DSM 105126 / CIP 53.77 / LMG 1025 / NCDC KC755 / 5377).